The following is a 100-amino-acid chain: NADH-quinone oxidoreductase subunit K (100 aa).

The next 3 helical transmembrane spans lie at 4–24 (YEYYVVLSGLLMVLGLIGIII), 29–49 (IAMLLSTELMLNAVNIAFVAF), and 60–80 (VFVFFILTIAAAEAAVGLGLI).

The protein belongs to the complex I subunit 4L family. As to quaternary structure, NDH-1 is composed of 14 different subunits. Subunits NuoA, H, J, K, L, M, N constitute the membrane sector of the complex.

The protein resides in the cell inner membrane. It catalyses the reaction a quinone + NADH + 5 H(+)(in) = a quinol + NAD(+) + 4 H(+)(out). In terms of biological role, NDH-1 shuttles electrons from NADH, via FMN and iron-sulfur (Fe-S) centers, to quinones in the respiratory chain. The immediate electron acceptor for the enzyme in this species is believed to be ubiquinone. Couples the redox reaction to proton translocation (for every two electrons transferred, four hydrogen ions are translocated across the cytoplasmic membrane), and thus conserves the redox energy in a proton gradient. This Persephonella marina (strain DSM 14350 / EX-H1) protein is NADH-quinone oxidoreductase subunit K.